A 468-amino-acid polypeptide reads, in one-letter code: Cysteine--tRNA ligase (468 aa).

Position 33 (Cys33) interacts with Zn(2+). A 'HIGH' region motif is present at residues 35 to 45 (ATVQGLPHIGH). The Zn(2+) site is built by Cys211, His236, and Glu240. The short motif at 267–271 (KMSKS) is the 'KMSKS' region element. Lys270 is an ATP binding site.

Belongs to the class-I aminoacyl-tRNA synthetase family. Monomer. Zn(2+) is required as a cofactor.

Its subcellular location is the cytoplasm. It carries out the reaction tRNA(Cys) + L-cysteine + ATP = L-cysteinyl-tRNA(Cys) + AMP + diphosphate. The polypeptide is Cysteine--tRNA ligase (Mycobacterium avium (strain 104)).